The sequence spans 353 residues: Probable peptidoglycan glycosyltransferase FtsW (353 aa).

8 consecutive transmembrane segments (helical) span residues 26-46, 53-73, 115-135, 137-157, 162-182, 242-262, 288-308, and 314-334; these read IFYF…PMSF, LILI…KSVH, FWGF…LLAE, DLGT…LSGV, FFII…FEPY, IIGE…IFFI, IGLW…GILP, and LPLI…ICIL.

It belongs to the SEDS family. FtsW subfamily.

Its subcellular location is the cell inner membrane. It carries out the reaction [GlcNAc-(1-&gt;4)-Mur2Ac(oyl-L-Ala-gamma-D-Glu-L-Lys-D-Ala-D-Ala)](n)-di-trans,octa-cis-undecaprenyl diphosphate + beta-D-GlcNAc-(1-&gt;4)-Mur2Ac(oyl-L-Ala-gamma-D-Glu-L-Lys-D-Ala-D-Ala)-di-trans,octa-cis-undecaprenyl diphosphate = [GlcNAc-(1-&gt;4)-Mur2Ac(oyl-L-Ala-gamma-D-Glu-L-Lys-D-Ala-D-Ala)](n+1)-di-trans,octa-cis-undecaprenyl diphosphate + di-trans,octa-cis-undecaprenyl diphosphate + H(+). The protein operates within cell wall biogenesis; peptidoglycan biosynthesis. Functionally, peptidoglycan polymerase that is essential for cell division. This is Probable peptidoglycan glycosyltransferase FtsW from Buchnera aphidicola subsp. Schizaphis graminum (strain Sg).